The following is a 393-amino-acid chain: uncharacterized protein (393 aa).

The next 8 helical transmembrane spans lie at 15–35, 56–76, 86–106, 131–151, 176–196, 253–273, 289–309, and 349–369; these read IVAF…VTIF, WGWI…NVII, FYAS…FQIV, AVLI…LITW, LSLT…VIAF, LLAN…VFMI, LIDL…IPVA, and VYLP…QVIW.

It localises to the cell membrane. This is an uncharacterized protein from Mycoplasma genitalium (strain ATCC 33530 / DSM 19775 / NCTC 10195 / G37) (Mycoplasmoides genitalium).